The sequence spans 281 residues: 4-diphosphocytidyl-2-C-methyl-D-erythritol kinase (281 aa).

K11 is an active-site residue. 92-102 (LVSAGLAGGSA) is a binding site for ATP. D132 is an active-site residue.

Belongs to the GHMP kinase family. IspE subfamily.

The catalysed reaction is 4-CDP-2-C-methyl-D-erythritol + ATP = 4-CDP-2-C-methyl-D-erythritol 2-phosphate + ADP + H(+). It participates in isoprenoid biosynthesis; isopentenyl diphosphate biosynthesis via DXP pathway; isopentenyl diphosphate from 1-deoxy-D-xylulose 5-phosphate: step 3/6. Its function is as follows. Catalyzes the phosphorylation of the position 2 hydroxy group of 4-diphosphocytidyl-2C-methyl-D-erythritol. In Ehrlichia ruminantium (strain Gardel), this protein is 4-diphosphocytidyl-2-C-methyl-D-erythritol kinase.